The sequence spans 326 residues: Phospho-N-acetylmuramoyl-pentapeptide-transferase (326 aa).

10 helical membrane-spanning segments follow: residues 5–25, 51–71, 82–102, 122–142, 148–168, 180–200, 204–224, 229–249, 252–272, and 304–324; these read GLLI…PIFI, TPTM…LIMA, VWLL…DDFI, IIIA…TVIY, LQFD…VGAS, LLAG…WYGI, VVAV…VFNA, VFMG…ISIL, LEIL…SVII, and VVTT…YIEV.

The protein belongs to the glycosyltransferase 4 family. MraY subfamily. Requires Mg(2+) as cofactor.

It is found in the cell membrane. The enzyme catalyses UDP-N-acetyl-alpha-D-muramoyl-L-alanyl-gamma-D-glutamyl-meso-2,6-diaminopimeloyl-D-alanyl-D-alanine + di-trans,octa-cis-undecaprenyl phosphate = di-trans,octa-cis-undecaprenyl diphospho-N-acetyl-alpha-D-muramoyl-L-alanyl-D-glutamyl-meso-2,6-diaminopimeloyl-D-alanyl-D-alanine + UMP. It functions in the pathway cell wall biogenesis; peptidoglycan biosynthesis. Functionally, catalyzes the initial step of the lipid cycle reactions in the biosynthesis of the cell wall peptidoglycan: transfers peptidoglycan precursor phospho-MurNAc-pentapeptide from UDP-MurNAc-pentapeptide onto the lipid carrier undecaprenyl phosphate, yielding undecaprenyl-pyrophosphoryl-MurNAc-pentapeptide, known as lipid I. The chain is Phospho-N-acetylmuramoyl-pentapeptide-transferase from Oceanobacillus iheyensis (strain DSM 14371 / CIP 107618 / JCM 11309 / KCTC 3954 / HTE831).